We begin with the raw amino-acid sequence, 365 residues long: Histidinol-phosphate aminotransferase 2 (365 aa).

Residue Lys221 is modified to N6-(pyridoxal phosphate)lysine.

The protein belongs to the class-II pyridoxal-phosphate-dependent aminotransferase family. Histidinol-phosphate aminotransferase subfamily. Homodimer. Pyridoxal 5'-phosphate serves as cofactor.

The catalysed reaction is L-histidinol phosphate + 2-oxoglutarate = 3-(imidazol-4-yl)-2-oxopropyl phosphate + L-glutamate. It participates in amino-acid biosynthesis; L-histidine biosynthesis; L-histidine from 5-phospho-alpha-D-ribose 1-diphosphate: step 7/9. This Bradyrhizobium diazoefficiens (strain JCM 10833 / BCRC 13528 / IAM 13628 / NBRC 14792 / USDA 110) protein is Histidinol-phosphate aminotransferase 2 (hisC2).